The sequence spans 242 residues: Probable septum site-determining protein MinC (242 aa).

It belongs to the MinC family. As to quaternary structure, interacts with MinD and FtsZ.

Functionally, cell division inhibitor that blocks the formation of polar Z ring septums. Rapidly oscillates between the poles of the cell to destabilize FtsZ filaments that have formed before they mature into polar Z rings. Prevents FtsZ polymerization. This is Probable septum site-determining protein MinC from Brucella anthropi (strain ATCC 49188 / DSM 6882 / CCUG 24695 / JCM 21032 / LMG 3331 / NBRC 15819 / NCTC 12168 / Alc 37) (Ochrobactrum anthropi).